The primary structure comprises 173 residues: MGKRYYCDYCDRSFQDNLHNRKKHLNGVQHHRAKKAWFDNFRDAATLLNDERSKEVCRKFVQTGQCVFGTSCRFSHMSEKQMKMLEQKIDDEKRQKEDPDQDGSSERSVDEWLSRREKKLAALTSGRVLRMEEEECTENIEIPPYLLSIPDLPPSLHPPPAGGWRVTVHNEWG.

A C3H1-type zinc finger spans residues 51-79 (ERSKEVCRKFVQTGQCVFGTSCRFSHMSE). The tract at residues 83–111 (KMLEQKIDDEKRQKEDPDQDGSSERSVDE) is disordered.

As to quaternary structure, component of the U11/U12 snRNPs that are part of the U12-type spliceosome.

Its subcellular location is the nucleus. The chain is Zinc finger matrin-type protein 5 (zmat5) from Danio rerio (Zebrafish).